The chain runs to 299 residues: Aspartate carbamoyltransferase catalytic subunit (299 aa).

2 residues coordinate carbamoyl phosphate: R51 and T52. K79 is a binding site for L-aspartate. Carbamoyl phosphate contacts are provided by R101, H130, and Q133. The L-aspartate site is built by R163 and R215. Residues G256 and P257 each contribute to the carbamoyl phosphate site.

This sequence belongs to the aspartate/ornithine carbamoyltransferase superfamily. ATCase family. As to quaternary structure, heterododecamer (2C3:3R2) of six catalytic PyrB chains organized as two trimers (C3), and six regulatory PyrI chains organized as three dimers (R2).

The enzyme catalyses carbamoyl phosphate + L-aspartate = N-carbamoyl-L-aspartate + phosphate + H(+). It functions in the pathway pyrimidine metabolism; UMP biosynthesis via de novo pathway; (S)-dihydroorotate from bicarbonate: step 2/3. In terms of biological role, catalyzes the condensation of carbamoyl phosphate and aspartate to form carbamoyl aspartate and inorganic phosphate, the committed step in the de novo pyrimidine nucleotide biosynthesis pathway. The polypeptide is Aspartate carbamoyltransferase catalytic subunit (Ehrlichia chaffeensis (strain ATCC CRL-10679 / Arkansas)).